A 73-amino-acid polypeptide reads, in one-letter code: Dermaseptin-H4 (73 aa).

Positions 1-22 (MAFMKKSLFLVLFLGMVSLSIC) are cleaved as a signal peptide. Residues 23–43 (EEEKRENEDEAKQEDDEQSEM) constitute a propeptide that is removed on maturation. A disordered region spans residues 25 to 45 (EKRENEDEAKQEDDEQSEMKR). Residues 30–40 (EDEAKQEDDEQ) show a composition bias toward acidic residues. Leu70 bears the Leucine amide mark. Residues 72-73 (EQ) constitute a propeptide that is removed on maturation.

As to expression, expressed by the skin glands.

The protein localises to the secreted. Has antibacterial activity against the Gram-negative bacteria E.coli ATCC 11775 (MIC=0.8 uM), and the Gram-positive bacteria S.aureus ATCC 12600 (MIC=0.4 uM) and M.luteus ATCC 49732 (MIC=0.8 uM). Does not inhibit the growth of the fungus C.albicans. Probably acts by disturbing membrane functions with its amphipathic structure. In Pithecopus azureus (Orange-legged monkey tree frog), this protein is Dermaseptin-H4.